Consider the following 300-residue polypeptide: Nucleotide-binding protein Dshi_0209 (300 aa).

An ATP-binding site is contributed by 20–27; the sequence is GPSGAGRT. 67–70 serves as a coordination point for GTP; it reads DART.

Belongs to the RapZ-like family.

Functionally, displays ATPase and GTPase activities. The polypeptide is Nucleotide-binding protein Dshi_0209 (Dinoroseobacter shibae (strain DSM 16493 / NCIMB 14021 / DFL 12)).